We begin with the raw amino-acid sequence, 454 residues long: Tryptophanase (454 aa).

Position 256 is an N6-(pyridoxal phosphate)lysine (Lys256).

It belongs to the beta-eliminating lyase family. Homotetramer. The cofactor is pyridoxal 5'-phosphate.

It carries out the reaction L-tryptophan + H2O = indole + pyruvate + NH4(+). It functions in the pathway amino-acid degradation; L-tryptophan degradation via pyruvate pathway; indole and pyruvate from L-tryptophan: step 1/1. The sequence is that of Tryptophanase from Hyphomonas neptunium (strain ATCC 15444).